The primary structure comprises 376 residues: Putative glutamate--cysteine ligase 2-1 (376 aa).

This sequence belongs to the glutamate--cysteine ligase type 2 family. YbdK subfamily.

The catalysed reaction is L-cysteine + L-glutamate + ATP = gamma-L-glutamyl-L-cysteine + ADP + phosphate + H(+). ATP-dependent carboxylate-amine ligase which exhibits weak glutamate--cysteine ligase activity. This Rubrobacter xylanophilus (strain DSM 9941 / JCM 11954 / NBRC 16129 / PRD-1) protein is Putative glutamate--cysteine ligase 2-1.